We begin with the raw amino-acid sequence, 1159 residues long: Reverse gyrase 2 (1159 aa).

The RG N-terminal-type zinc finger occupies 1-40; it reads MALELIERGCPNCGGVISSDRLEKGLPCSKCLPKPTEEKV. Residues cysteine 10, cysteine 13, cysteine 28, and cysteine 31 each coordinate Zn(2+). Residues glutamine 82 and 99–106 contribute to the ATP site; that span reads APTGVGKT. The region spanning 86–275 is the Helicase ATP-binding domain; sequence AKRVFMNQSF…LFRNLLGFDV (190 aa). The DEAD box signature appears at 196–199; the sequence is DDID. Residues 583–1159 form a topoisomerase I region; that stretch reads DLFKTTLVIV…LLKEEKAFKK (577 aa). The Toprim domain occupies 587–743; sequence TTLVIVESPN…NIKRAEFHEV (157 aa). Residues glutamate 593 and aspartate 712 each contribute to the Mg(2+) site. The region spanning 759–1152 is the Topo IA-type catalytic domain; it reads DLNLVKAQLV…EVHRIKVLLK (394 aa). The active-site O-(5'-phospho-DNA)-tyrosine intermediate is the tyrosine 902.

This sequence in the N-terminal section; belongs to the DEAD box helicase family. DDVD subfamily. In the C-terminal section; belongs to the type IA topoisomerase family. Monomer. Requires Zn(2+) as cofactor. The cofactor is Mg(2+).

Its subcellular location is the cytoplasm. It carries out the reaction ATP + H2O = ADP + phosphate + H(+). Its function is as follows. Modifies the topological state of DNA by introducing positive supercoils in an ATP-dependent process, increasing the linking number in steps of +1. Binds to single-stranded DNA, transiently cleaves and then rejoins the ends, introducing a positive supercoil in the process. The scissile phosphodiester is attacked by the catalytic tyrosine of the enzyme, resulting in the formation of a DNA-(5'-phosphotyrosyl)-enzyme intermediate. Probably involved in rewinding DNA strands in regions of the chromosome that have opened up to allow replication, transcription, DNA repair and/or for DNA protection. This is Reverse gyrase 2 from Aquifex aeolicus (strain VF5).